The primary structure comprises 261 residues: Monensin polyketide synthase putative ketoacyl reductase (261 aa).

10 to 34 provides a ligand contact to NAD(+); that stretch reads LVTGATSGIGLATARLLAAQGHLVF. Residue Ser144 coordinates substrate. Tyr157 functions as the Proton acceptor in the catalytic mechanism.

This sequence belongs to the short-chain dehydrogenases/reductases (SDR) family.

The protein operates within antifungal biosynthesis; monensin biosynthesis. The protein is Monensin polyketide synthase putative ketoacyl reductase of Streptomyces virginiae (Streptomyces cinnamonensis).